A 933-amino-acid polypeptide reads, in one-letter code: Protein translocase subunit SecA (933 aa).

ATP is bound by residues Q90, 108–112, and D504; that span reads GEGKT. A disordered region spans residues 539 to 570; sequence GMGSNNRRPQGFGQDSKKKKWQPSADIFPTDL.

The protein belongs to the SecA family. Monomer and homodimer. Part of the essential Sec protein translocation apparatus which comprises SecA, SecYEG and auxiliary proteins SecDF. Other proteins may also be involved.

Its subcellular location is the cell inner membrane. It localises to the cellular thylakoid membrane. The protein localises to the cytoplasm. It catalyses the reaction ATP + H2O + cellular proteinSide 1 = ADP + phosphate + cellular proteinSide 2.. Its function is as follows. Part of the Sec protein translocase complex. Interacts with the SecYEG preprotein conducting channel. Has a central role in coupling the hydrolysis of ATP to the transfer of proteins into and across the cell membrane, serving as an ATP-driven molecular motor driving the stepwise translocation of polypeptide chains across the membrane. Probably participates in protein translocation into and across both the cytoplasmic and thylakoid membranes in cyanobacterial cells. This is Protein translocase subunit SecA from Crocosphaera subtropica (strain ATCC 51142 / BH68) (Cyanothece sp. (strain ATCC 51142)).